Consider the following 360-residue polypeptide: Phenylalanine--tRNA ligase alpha subunit (360 aa).

Glu260 lines the Mg(2+) pocket.

The protein belongs to the class-II aminoacyl-tRNA synthetase family. Phe-tRNA synthetase alpha subunit type 1 subfamily. As to quaternary structure, tetramer of two alpha and two beta subunits. Mg(2+) serves as cofactor.

It localises to the cytoplasm. It catalyses the reaction tRNA(Phe) + L-phenylalanine + ATP = L-phenylalanyl-tRNA(Phe) + AMP + diphosphate + H(+). This is Phenylalanine--tRNA ligase alpha subunit from Afipia carboxidovorans (strain ATCC 49405 / DSM 1227 / KCTC 32145 / OM5) (Oligotropha carboxidovorans).